Here is a 150-residue protein sequence, read N- to C-terminus: Large ribosomal subunit protein uL15 (150 aa).

The protein belongs to the universal ribosomal protein uL15 family. As to quaternary structure, part of the 50S ribosomal subunit.

In terms of biological role, binds to the 23S rRNA. The chain is Large ribosomal subunit protein uL15 from Rickettsia typhi (strain ATCC VR-144 / Wilmington).